The sequence spans 353 residues: MAERGAHITTTSPLDDRPSIFEVVAQESLMAAARPALHHIVKVLAESNPARYGTLWRWFDELYTLLECLLQQHYLSWASASFSENFYGLKRVTLGKQVGQRNLARKEYWKSLLLLVLIPYLRIKLEKLVNSLREEEDYSIQNPTSFHKRCYKAILASYPFLKLGWEAWFLFYQLRYILWNGKHHSPLLRLAGVQLARLTMEDLRAMEKQEELTNTVSNVVSISQHIRSILKKALGAVTLSVSSSLSLGVFFLQFLDWWYSAENRETLKSLGNLPVPPPPIHFDLETYSPLLPKLRTVCPLCRKVRVNDTALGTSGYVFCYRCAYYYVKTHQRCPVSGYPTELQHLIKLYTPDG.

Topologically, residues 1-19 (MAERGAHITTTSPLDDRPS) are peroxisomal matrix. A helical membrane pass occupies residues 20 to 47 (IFEVVAQESLMAAARPALHHIVKVLAES). Over 48 to 51 (NPAR) the chain is Cytoplasmic. Residues 52–76 (YGTLWRWFDELYTLLECLLQQHYLS) traverse the membrane as a helical segment. Over 77 to 104 (WASASFSENFYGLKRVTLGKQVGQRNLA) the chain is Peroxisomal matrix. A helical membrane pass occupies residues 105 to 134 (RKEYWKSLLLLVLIPYLRIKLEKLVNSLRE). Topologically, residues 135-139 (EEDYS) are cytoplasmic. Residues 140–178 (IQNPTSFHKRCYKAILASYPFLKLGWEAWFLFYQLRYIL) traverse the membrane as a helical segment. Residues 179 to 243 (WNGKHHSPLL…LGAVTLSVSS (65 aa)) are Peroxisomal matrix-facing. The helical transmembrane segment at 244 to 271 (SLSLGVFFLQFLDWWYSAENRETLKSLG) threads the bilayer. Topologically, residues 272 to 353 (NLPVPPPPIH…HLIKLYTPDG (82 aa)) are cytoplasmic. Residues C298, C301, C319, and C322 each contribute to the Zn(2+) site. The RING-type; degenerate zinc finger occupies 298–337 (CPLCRKVRVNDTALGTSGYVFCYRCAYYYVKTHQRCPVSG).

This sequence belongs to the pex2/pex10/pex12 family. In terms of assembly, component of the PEX2-PEX10-PEX12 retrotranslocation channel.

It localises to the peroxisome membrane. It functions in the pathway protein modification; protein ubiquitination. Its function is as follows. Component of a retrotranslocation channel required for peroxisome organization by mediating export of the PEX5 receptor from peroxisomes to the cytosol, thereby promoting PEX5 recycling. The retrotranslocation channel is composed of PEX2, PEX10 and PEX12; each subunit contributing transmembrane segments that coassemble into an open channel that specifically allows the passage of PEX5 through the peroxisomal membrane. PEX12 also regulates PEX5 recycling by activating the E3 ubiquitin-protein ligase activity of PEX10. When PEX5 recycling is compromised, PEX12 stimulates PEX10-mediated polyubiquitination of PEX5, leading to its subsequent degradation. The polypeptide is Peroxisome assembly protein 12-B (Xenopus laevis (African clawed frog)).